Consider the following 416-residue polypeptide: Phosphoglycerate kinase (416 aa).

Residues Val-23, Asp-24, Phe-25, Asn-26, Gln-38, Arg-39, Ser-62, His-63, Gly-65, Arg-66, Leu-121, Arg-122, His-168, and Arg-169 each contribute to the (2R)-3-phosphoglycerate site. Gly-212 contributes to the ADP binding site. Residue Gly-212 coordinates CDP. The AMP site is built by Ala-213 and Lys-214. An ATP-binding site is contributed by Ala-213. Ala-213 provides a ligand contact to Mg(2+). Residues Ala-216 and Asp-217 each coordinate Mg(2+). Asp-217 lines the CDP pocket. Lys-218 is an AMP binding site. Lys-218 contributes to the ATP binding site. Gly-236 provides a ligand contact to ADP. Gly-236 is a binding site for CDP. 2 residues coordinate AMP: Gly-237 and Gly-311. ATP-binding residues include Gly-237 and Gly-311. 2 residues coordinate CDP: Gly-336 and Phe-341. Residue Phe-341 coordinates ADP. Glu-342 is a binding site for AMP. Positions 342, 373, and 374 each coordinate ATP. Asp-373 lines the Mg(2+) pocket.

It belongs to the phosphoglycerate kinase family. Monomer. Mg(2+) is required as a cofactor.

The protein localises to the cytoplasm. It localises to the mitochondrion. The catalysed reaction is (2R)-3-phosphoglycerate + ATP = (2R)-3-phospho-glyceroyl phosphate + ADP. The protein operates within carbohydrate degradation; glycolysis; pyruvate from D-glyceraldehyde 3-phosphate: step 2/5. Its function is as follows. Catalyzes one of the two ATP producing reactions in the glycolytic pathway via the reversible conversion of 1,3-diphosphoglycerate to 3-phosphoglycerate. Both L- and D- forms of purine and pyrimidine nucleotides can be used as substrates, but the activity is much lower on pyrimidines. Negatively regulates the biosynthesis of acetyl-CoA from pyruvate in the mitochondrion. The polypeptide is Phosphoglycerate kinase (PGK1) (Candida glabrata (strain ATCC 2001 / BCRC 20586 / JCM 3761 / NBRC 0622 / NRRL Y-65 / CBS 138) (Yeast)).